We begin with the raw amino-acid sequence, 216 residues long: uncharacterized protein (216 aa).

Helical transmembrane passes span 5-27 (ISLI…IAFS), 98-120 (FLSF…VFLL), 125-147 (VLIW…TFTN), and 185-207 (GTLF…GILG).

It localises to the cell membrane. This is an uncharacterized protein from Aquifex aeolicus (strain VF5).